Here is a 610-residue protein sequence, read N- to C-terminus: Putative protein tag-250 (610 aa).

Tudor domains follow at residues 149-260 and 386-506; these read VALK…LLPP and MPMS…KIGG.

This chain is Putative protein tag-250 (tag-250), found in Caenorhabditis elegans.